Here is a 294-residue protein sequence, read N- to C-terminus: Phosphatidylglycerol--prolipoprotein diacylglyceryl transferase (294 aa).

7 helical membrane-spanning segments follow: residues 19 to 39, 69 to 89, 101 to 121, 139 to 159, 195 to 215, 224 to 244, and 267 to 287; these read VFGF…GIVL, LLTW…VFFY, ILAV…VIAA, IMAL…FINA, QLYE…WLVW, GYVA…VEFF, and WGLT…IWLI. Arginine 152 serves as a coordination point for a 1,2-diacyl-sn-glycero-3-phospho-(1'-sn-glycerol).

Belongs to the Lgt family.

The protein resides in the cell inner membrane. It catalyses the reaction L-cysteinyl-[prolipoprotein] + a 1,2-diacyl-sn-glycero-3-phospho-(1'-sn-glycerol) = an S-1,2-diacyl-sn-glyceryl-L-cysteinyl-[prolipoprotein] + sn-glycerol 1-phosphate + H(+). Its pathway is protein modification; lipoprotein biosynthesis (diacylglyceryl transfer). Its function is as follows. Catalyzes the transfer of the diacylglyceryl group from phosphatidylglycerol to the sulfhydryl group of the N-terminal cysteine of a prolipoprotein, the first step in the formation of mature lipoproteins. This chain is Phosphatidylglycerol--prolipoprotein diacylglyceryl transferase, found in Roseobacter denitrificans (strain ATCC 33942 / OCh 114) (Erythrobacter sp. (strain OCh 114)).